Here is a 260-residue protein sequence, read N- to C-terminus: MASHEQALILEPAGELRFKGPFTDVVTADLKLSNPTDRRICFKVKTTAPKRYCVRPNSGILEPKTSIAVAVMLQPFNYDPNEKNKHKFMVQSMYAPDHVVESQELLWKDAPPESLMDTKLRCVFEMPDGSHQAPASDASRATDAGAHFSESALEDPTVASRKTETQSPKRVGAVGSAGEDVKKLQHELKKAQSEITSLKGENSQLKDEGIRLRKVAMTDTVSPTPLNPSPAPAAAVRAFPPVVYVVAAIILGLIIGKFLL.

At 1–238 (MASHEQALIL…SPAPAAAVRA (238 aa)) the chain is on the cytoplasmic side. One can recognise an MSP domain in the interval 7–125 (ALILEPAGEL…MDTKLRCVFE (119 aa)). The interval 127–177 (PDGSHQAPASDASRATDAGAHFSESALEDPTVASRKTETQSPKRVGAVGSA) is disordered. The stretch at 172 to 216 (GAVGSAGEDVKKLQHELKKAQSEITSLKGENSQLKDEGIRLRKVA) forms a coiled coil. The chain crosses the membrane as a helical; Anchor for type IV membrane protein span at residues 239 to 259 (FPPVVYVVAAIILGLIIGKFL).

The protein belongs to the VAMP-associated protein (VAP) (TC 9.B.17) family. In terms of tissue distribution, detected only in the central nervous system and the gill of aplysia.

The protein localises to the membrane. It localises to the synapse. The protein resides in the synaptosome. Required for neurotransmitter release. Interacts with VAMP. In Aplysia californica (California sea hare), this protein is Vesicle-associated membrane protein/synaptobrevin-binding protein.